The primary structure comprises 375 residues: MDIGRKIELITKRPTEELLTVENLRHLLEIGAPMQHYIGFEISGYIHLGTGLMAGAKIADLQKAGIKTRIFLADWHSWINDKLGGDLEIIQKVALTYFKEGMKQSIKVMGGDPDKVEFVLASEILEKGDYWQTVIDISKNVTLARMMRSITIMGRQMGEAIDFAKLIYPAMQVADIFYQGVTIAHAGMDQRKAHVIAIEVAQKLKYHAIEHNGEKLKPVALHHHLLLGLQEPPVWPIESEEQYKELKTQMKMSKSKPYSAVFIHDTPEEIKQKLRKAFCPAREVKYNPVLDWAEYIIFREEPTEFTIHRPAKFGGDVTYTTFEELKRDFAEGKLHPLDLKNAVAEYLIELLKPVRDYFEKHPEPLELMREIKITR.

Residues tyrosine 37, tyrosine 168, glutamine 172, aspartate 175, and glutamine 190 each coordinate L-tyrosine. The 'KMSKS' region signature appears at 251 to 255 (KMSKS). Residue lysine 254 coordinates ATP.

Belongs to the class-I aminoacyl-tRNA synthetase family. TyrS type 4 subfamily. As to quaternary structure, homodimer.

The protein resides in the cytoplasm. It carries out the reaction tRNA(Tyr) + L-tyrosine + ATP = L-tyrosyl-tRNA(Tyr) + AMP + diphosphate + H(+). Catalyzes the attachment of tyrosine to tRNA(Tyr) in a two-step reaction: tyrosine is first activated by ATP to form Tyr-AMP and then transferred to the acceptor end of tRNA(Tyr). This chain is Tyrosine--tRNA ligase, found in Thermococcus onnurineus (strain NA1).